Here is a 488-residue protein sequence, read N- to C-terminus: Glutamate--tRNA ligase (488 aa).

Residues 9 to 19 (PSPTGFLHIGG) carry the 'HIGH' region motif. Positions 112, 114, 139, and 141 each coordinate Zn(2+). Positions 256-260 (KLSKR) match the 'KMSKS' region motif. Lysine 259 is a binding site for ATP.

This sequence belongs to the class-I aminoacyl-tRNA synthetase family. Glutamate--tRNA ligase type 1 subfamily. In terms of assembly, monomer. Requires Zn(2+) as cofactor.

The protein localises to the cytoplasm. The enzyme catalyses tRNA(Glu) + L-glutamate + ATP = L-glutamyl-tRNA(Glu) + AMP + diphosphate. Functionally, catalyzes the attachment of glutamate to tRNA(Glu) in a two-step reaction: glutamate is first activated by ATP to form Glu-AMP and then transferred to the acceptor end of tRNA(Glu). This is Glutamate--tRNA ligase from Elusimicrobium minutum (strain Pei191).